The following is a 138-amino-acid chain: Ig heavy chain V region TEPC 1017 (138 aa).

An N-terminal signal peptide occupies residues M1–Q20. The framework-1 stretch occupies residues V21–T49. A disulfide bridge links C41 with C115. The interval N50–H54 is complementarity-determining-1. A framework-2 region spans residues W55–G68. Residues E69 to N85 form a complementarity-determining-2 region. The framework-3 stretch occupies residues K86–R117. The complementarity-determining-3 stretch occupies residues S118–Y127. Residues W128–A138 form a framework-4 region.

The polypeptide is Ig heavy chain V region TEPC 1017 (Mus musculus (Mouse)).